The primary structure comprises 376 residues: Cyclin-dependent kinase 9-A (376 aa).

The Protein kinase domain occupies 19–319 (YERLAKIGQG…SDDALNNDFF (301 aa)). Residues 25–33 (IGQGTFGEV) and lysine 48 contribute to the ATP site. The active-site Proton acceptor is aspartate 153. Residues 345 to 376 (PPRRRGGHMPQQPANQARNPAATNQSEFERVF) are disordered. Positions 354–369 (PQQPANQARNPAATNQ) are enriched in low complexity.

The protein belongs to the protein kinase superfamily. CMGC Ser/Thr protein kinase family. CDC2/CDKX subfamily. In terms of assembly, associates with cyclin-T to form P-TEFb.

The protein localises to the nucleus. It carries out the reaction L-seryl-[protein] + ATP = O-phospho-L-seryl-[protein] + ADP + H(+). The catalysed reaction is L-threonyl-[protein] + ATP = O-phospho-L-threonyl-[protein] + ADP + H(+). It catalyses the reaction [DNA-directed RNA polymerase] + ATP = phospho-[DNA-directed RNA polymerase] + ADP + H(+). Functionally, member of the cyclin-dependent kinase pair (CDK9/cyclin-T) complex, also called positive transcription elongation factor B (P-TEFb), which is proposed to facilitate the transition from abortive to production elongation by phosphorylating the CTD (C-terminal domain) of the large subunit of RNA polymerase II (RNAP II) and SUPT5H. In Xenopus laevis (African clawed frog), this protein is Cyclin-dependent kinase 9-A (cdk9-a).